The primary structure comprises 450 residues: 3',5'-cyclic-AMP phosphodiesterase 7B (450 aa).

Residues 97 to 420 (LDEDYLGQAR…AQWKSLLPRQ (324 aa)) enclose the PDEase domain. The Proton donor role is filled by His173. A divalent metal cation contacts are provided by His177, His213, Asp214, and Asp323. Residues 418-450 (PRQHRSRGSSGSGPDHDHAGQGTESEEQEGDSP) are disordered. Ser426 carries the phosphoserine modification. Acidic residues predominate over residues 441-450 (ESEEQEGDSP).

It belongs to the cyclic nucleotide phosphodiesterase family. PDE7 subfamily. The cofactor is a divalent metal cation. As to expression, highly expressed in brain. Also expressed in heart, liver, skeletal muscle and pancreas.

It catalyses the reaction 3',5'-cyclic AMP + H2O = AMP + H(+). Its pathway is purine metabolism; 3',5'-cyclic AMP degradation; AMP from 3',5'-cyclic AMP: step 1/1. Inhibited by dipyridamole, IBMX and SCH 51866. Insensitive to zaprinast, rolipram, and milrinone. Functionally, hydrolyzes the second messenger cAMP, which is a key regulator of many important physiological processes. May be involved in the control of cAMP-mediated neural activity and cAMP metabolism in the brain. In Homo sapiens (Human), this protein is 3',5'-cyclic-AMP phosphodiesterase 7B.